Consider the following 709-residue polypeptide: Polyribonucleotide nucleotidyltransferase (709 aa).

Mg(2+) is bound by residues Asp487 and Asp493. Residues 554 to 613 enclose the KH domain; sequence PRIHTMKISSDKIKDVIGKGGAVIRALCEETGTTIEIEDDGTIKIAATEGAAAKEAIRRI. Residues 623–691 form the S1 motif domain; that stretch reads GKIYPGKVMR…RQGRIRLSIK (69 aa).

The protein belongs to the polyribonucleotide nucleotidyltransferase family. As to quaternary structure, component of the RNA degradosome, which is a multiprotein complex involved in RNA processing and mRNA degradation. Requires Mg(2+) as cofactor.

It is found in the cytoplasm. The catalysed reaction is RNA(n+1) + phosphate = RNA(n) + a ribonucleoside 5'-diphosphate. Involved in mRNA degradation. Catalyzes the phosphorolysis of single-stranded polyribonucleotides processively in the 3'- to 5'-direction. The protein is Polyribonucleotide nucleotidyltransferase of Aliivibrio salmonicida (strain LFI1238) (Vibrio salmonicida (strain LFI1238)).